Here is a 36-residue protein sequence, read N- to C-terminus: Photosystem I reaction center subunit VIII (36 aa).

The helical transmembrane segment at 9–29 (ILVPLVGLVFPAIAMASLFLY) threads the bilayer.

Belongs to the PsaI family.

The protein localises to the plastid. Its subcellular location is the chloroplast thylakoid membrane. Its function is as follows. May help in the organization of the PsaL subunit. The polypeptide is Photosystem I reaction center subunit VIII (Oltmannsiellopsis viridis (Marine flagellate)).